The primary structure comprises 258 residues: tRNA pseudouridine synthase A (258 aa).

D53 serves as the catalytic Nucleophile. Y111 lines the substrate pocket.

The protein belongs to the tRNA pseudouridine synthase TruA family. As to quaternary structure, homodimer.

The catalysed reaction is uridine(38/39/40) in tRNA = pseudouridine(38/39/40) in tRNA. Its function is as follows. Formation of pseudouridine at positions 38, 39 and 40 in the anticodon stem and loop of transfer RNAs. This chain is tRNA pseudouridine synthase A, found in Streptococcus agalactiae serotype III (strain NEM316).